Here is a 301-residue protein sequence, read N- to C-terminus: Probable alpha-L-glutamate ligase (301 aa).

Residues 104–287 (LQLLSRKGIG…IAGLIVAYME (184 aa)) form the ATP-grasp domain. ATP contacts are provided by residues lysine 141, 178–179 (EF), aspartate 187, and 211–213 (RSN). Mg(2+)-binding residues include aspartate 248, glutamate 260, and asparagine 262. The Mn(2+) site is built by aspartate 248, glutamate 260, and asparagine 262.

It belongs to the RimK family. It depends on Mg(2+) as a cofactor. Requires Mn(2+) as cofactor.

This is Probable alpha-L-glutamate ligase from Cellvibrio japonicus (strain Ueda107) (Pseudomonas fluorescens subsp. cellulosa).